A 588-amino-acid polypeptide reads, in one-letter code: Dual specificity tyrosine-phosphorylation-regulated kinase 3 (588 aa).

Residues 1 to 188 (MGGTARGPGR…HGVIGGPNNG (188 aa)) are disordered. Positions 97–134 (SNTIQSDGISDSEKCSPTVSQGKSSDCLNTVKSNSSSK) are enriched in polar residues. Residues 209–522 (YEVLKIIGKG…PAQALRHPWI (314 aa)) form the Protein kinase domain. ATP is bound by residues 215-223 (IGKGSFGQV), K238, and 288-291 (FELL). The active-site Proton acceptor is D335. At S350 the chain carries Phosphoserine. Y369 bears the Phosphotyrosine mark. A Nuclear localization signal motif is present at residues 468-481 (RSRRGKKRGPPGSK).

It belongs to the protein kinase superfamily. CMGC Ser/Thr protein kinase family. MNB/DYRK subfamily. In terms of assembly, interacts with SIRT1. The cofactor is Mg(2+). Post-translationally, ubiquitinated at anaphase by the anaphase-promoting complex (APC/C), leading to its degradation by the proteasome. Protein kinase activity is activated following autophosphorylation at Tyr-369. Autophosphorylation at Ser-350 stabilizes the protein and enhances the protein kinase activity. Isoform 1: Highly expressed in testis and in hematopoietic tissue such as fetal liver, and bone marrow. Isoform 1: Predominant form in fetal liver and bone marrow. Isoform 1: Present at low levels in heart, pancreas, lymph node and thymus. Isoform 2: Highly expressed in testis and in hematopoietic tissue such as fetal liver, and bone marrow. Isoform 2: Predominant form in testis. Isoform 2: Present at low levels in heart, pancreas, lymph node and thymus.

It is found in the nucleus. Its subcellular location is the cytoplasm. The protein localises to the nucleus speckle. It localises to the cytoplasmic granule. The protein resides in the cytoskeleton. It is found in the microtubule organizing center. Its subcellular location is the centrosome. The catalysed reaction is L-seryl-[protein] + ATP = O-phospho-L-seryl-[protein] + ADP + H(+). The enzyme catalyses L-threonyl-[protein] + ATP = O-phospho-L-threonyl-[protein] + ADP + H(+). It carries out the reaction L-tyrosyl-[protein] + ATP = O-phospho-L-tyrosyl-[protein] + ADP + H(+). With respect to regulation, protein kinase activity is activated following autophosphorylation at Tyr-369. Inhibited by harmine, an ATP competitive inhibitor. Inhibited by small-compound GSK-626616. Dual-specificity protein kinase that promotes disassembly of several types of membraneless organelles during mitosis, such as stress granules, nuclear speckles and pericentriolar material. Dual-specificity tyrosine-regulated kinases (DYRKs) autophosphorylate a critical tyrosine residue in their activation loop and phosphorylate their substrate on serine and threonine residues. Acts as a central dissolvase of membraneless organelles during the G2-to-M transition, after the nuclear-envelope breakdown: acts by mediating phosphorylation of multiple serine and threonine residues in unstructured domains of proteins, such as SRRM1 and PCM1. Does not mediate disassembly of all membraneless organelles: disassembly of P-body and nucleolus is not regulated by DYRK3. Dissolution of membraneless organelles at the onset of mitosis is also required to release mitotic regulators, such as ZNF207, from liquid-unmixed organelles where they are sequestered and keep them dissolved during mitosis. Regulates mTORC1 by mediating the dissolution of stress granules: during stressful conditions, DYRK3 partitions from the cytosol to the stress granule, together with mTORC1 components, which prevents mTORC1 signaling. When stress signals are gone, the kinase activity of DYRK3 is required for the dissolution of stress granule and mTORC1 relocation to the cytosol: acts by mediating the phosphorylation of the mTORC1 inhibitor AKT1S1, allowing full reactivation of mTORC1 signaling. Also acts as a negative regulator of EPO-dependent erythropoiesis: may place an upper limit on red cell production during stress erythropoiesis. Inhibits cell death due to cytokine withdrawal in hematopoietic progenitor cells. Promotes cell survival upon genotoxic stress through phosphorylation of SIRT1: this in turn inhibits p53/TP53 activity and apoptosis. The sequence is that of Dual specificity tyrosine-phosphorylation-regulated kinase 3 from Homo sapiens (Human).